The chain runs to 421 residues: Protein FAM110C (421 aa).

Disordered stretches follow at residues 1 to 36, 51 to 80, and 141 to 266; these read MRAL…NKSA, TLGS…PSAL, and TTRV…PASM. 3 stretches are compositionally biased toward basic and acidic residues: residues 143–155, 185–202, and 232–249; these read RVAD…KETE and PAEK…KETE. Ser350 carries the phosphoserine modification.

The protein belongs to the FAM110 family. Interacts with AKT1; the interaction is transient and follows AKT1 activation. Interacts with PPP2CA and alpha-tubulin.

The protein resides in the cytoplasm. Its subcellular location is the cytoskeleton. The protein localises to the microtubule organizing center. It is found in the centrosome. It localises to the spindle pole. The protein resides in the nucleus. Its function is as follows. May play a role in microtubule organization. May play a role in cell spreading and cell migration of epithelial cells; the function may involve the AKT1 signaling pathway. The chain is Protein FAM110C (Fam110c) from Mus musculus (Mouse).